The following is a 666-amino-acid chain: Asperfuranone cluster transcription factor afoA (666 aa).

A DNA-binding region (zn(2)-C6 fungal-type) is located at residues 16–43 (CEECRRRKARCDRVRPKCGFCTENELQC). Disordered stretches follow at residues 184 to 206 (LSFDLLNETPPPPSTTTTTSTTR) and 347 to 373 (AGSDRQLSPPSSSPPSSLTLSPSGENA). Residues 353–369 (LSPPSSSPPSSLTLSPS) are compositionally biased toward low complexity.

It is found in the nucleus. In terms of biological role, transcription factor that regulates the expression of the gene cluster that mediates the biosynthesis of asperfuranone, a probable antitumor agent. In Emericella nidulans (strain FGSC A4 / ATCC 38163 / CBS 112.46 / NRRL 194 / M139) (Aspergillus nidulans), this protein is Asperfuranone cluster transcription factor afoA.